The sequence spans 178 residues: CDP-archaeol synthase (178 aa).

Transmembrane regions (helical) follow at residues 3-23 (LLLL…ANAV), 56-76 (FFGI…VILY), 91-111 (IILS…GSFI), 131-151 (FIIF…NIIV), and 152-172 (LLLV…YKLH).

This sequence belongs to the CDP-archaeol synthase family. Mg(2+) serves as cofactor.

It localises to the cell membrane. It carries out the reaction 2,3-bis-O-(geranylgeranyl)-sn-glycerol 1-phosphate + CTP + H(+) = CDP-2,3-bis-O-(geranylgeranyl)-sn-glycerol + diphosphate. It participates in membrane lipid metabolism; glycerophospholipid metabolism. Catalyzes the formation of CDP-2,3-bis-(O-geranylgeranyl)-sn-glycerol (CDP-archaeol) from 2,3-bis-(O-geranylgeranyl)-sn-glycerol 1-phosphate (DGGGP) and CTP. This reaction is the third ether-bond-formation step in the biosynthesis of archaeal membrane lipids. This Methanococcus maripaludis (strain DSM 14266 / JCM 13030 / NBRC 101832 / S2 / LL) protein is CDP-archaeol synthase.